The sequence spans 443 residues: Thymidine phosphorylase (443 aa).

It belongs to the thymidine/pyrimidine-nucleoside phosphorylase family. As to quaternary structure, homodimer.

It carries out the reaction thymidine + phosphate = 2-deoxy-alpha-D-ribose 1-phosphate + thymine. Its pathway is pyrimidine metabolism; dTMP biosynthesis via salvage pathway; dTMP from thymine: step 1/2. Its function is as follows. The enzymes which catalyze the reversible phosphorolysis of pyrimidine nucleosides are involved in the degradation of these compounds and in their utilization as carbon and energy sources, or in the rescue of pyrimidine bases for nucleotide synthesis. The protein is Thymidine phosphorylase of Aliivibrio salmonicida (strain LFI1238) (Vibrio salmonicida (strain LFI1238)).